The primary structure comprises 844 residues: DNA mismatch repair protein MutS (844 aa).

610 to 617 (GPNMGGKS) lines the ATP pocket.

Belongs to the DNA mismatch repair MutS family.

This protein is involved in the repair of mismatches in DNA. It is possible that it carries out the mismatch recognition step. This protein has a weak ATPase activity. The polypeptide is DNA mismatch repair protein MutS (Francisella tularensis subsp. holarctica (strain FTNF002-00 / FTA)).